The primary structure comprises 260 residues: MKKADAPSSEPPELKALWESWLADLGWQPSEQQQQQLQQLYPLVMAGNRTQNLTRITDPIDFWEKHLWDSLRGLRLLGSWEAIQAQPWRGIDIGTGAGFPGIPAQIALPQTRFTLLDSTQRKIAFVQDILQRLSLTQARAVAQRAEIWGQDPQERGSYDIALARALASAEICAEYCLPLLKVGGRAILYRGHWTEAEAQTLEQALELLGGKLIHVEAFTTPRSRGVRHCLLLEKVAPTPPPYPRSPGTPKRQPLGQSNRP.

S-adenosyl-L-methionine is bound by residues Gly-94, Phe-99, 117–119, 145–146, and Arg-164; these read DST and AE. Positions 236–260 are disordered; the sequence is APTPPPYPRSPGTPKRQPLGQSNRP. Pro residues predominate over residues 237 to 246; sequence PTPPPYPRSP.

This sequence belongs to the methyltransferase superfamily. RNA methyltransferase RsmG family.

Its subcellular location is the cytoplasm. Its function is as follows. Specifically methylates the N7 position of a guanine in 16S rRNA. The protein is Ribosomal RNA small subunit methyltransferase G of Synechococcus sp. (strain JA-2-3B'a(2-13)) (Cyanobacteria bacterium Yellowstone B-Prime).